Reading from the N-terminus, the 320-residue chain is GTP 3',8-cyclase (320 aa).

One can recognise a Radical SAM core domain in the interval 5 to 222; it reads KLSRPLKVLR…LMKKEFTFYP (218 aa). Residue R14 participates in GTP binding. Positions 21, 25, and 28 each coordinate [4Fe-4S] cluster. GTP is bound at residue R65. Position 69 (G69) interacts with S-adenosyl-L-methionine. T96 provides a ligand contact to GTP. An S-adenosyl-L-methionine-binding site is contributed by S120. Residue K157 coordinates GTP. M191 provides a ligand contact to S-adenosyl-L-methionine. The [4Fe-4S] cluster site is built by C253 and C256. 258–260 serves as a coordination point for GTP; sequence RIR. C270 lines the [4Fe-4S] cluster pocket.

It belongs to the radical SAM superfamily. MoaA family. Monomer and homodimer. Requires [4Fe-4S] cluster as cofactor.

The catalysed reaction is GTP + AH2 + S-adenosyl-L-methionine = (8S)-3',8-cyclo-7,8-dihydroguanosine 5'-triphosphate + 5'-deoxyadenosine + L-methionine + A + H(+). It functions in the pathway cofactor biosynthesis; molybdopterin biosynthesis. In terms of biological role, catalyzes the cyclization of GTP to (8S)-3',8-cyclo-7,8-dihydroguanosine 5'-triphosphate. The sequence is that of GTP 3',8-cyclase from Aquifex aeolicus (strain VF5).